We begin with the raw amino-acid sequence, 274 residues long: NH(3)-dependent NAD(+) synthetase (274 aa).

46–53 (GISGGQDS) is an ATP binding site. Asp52 is a Mg(2+) binding site. A deamido-NAD(+)-binding site is contributed by Arg140. ATP is bound at residue Thr160. Glu165 lines the Mg(2+) pocket. Positions 173 and 180 each coordinate deamido-NAD(+). Positions 189 and 211 each coordinate ATP. 260 to 261 (HK) contributes to the deamido-NAD(+) binding site.

The protein belongs to the NAD synthetase family. In terms of assembly, homodimer.

It catalyses the reaction deamido-NAD(+) + NH4(+) + ATP = AMP + diphosphate + NAD(+) + H(+). Its pathway is cofactor biosynthesis; NAD(+) biosynthesis; NAD(+) from deamido-NAD(+) (ammonia route): step 1/1. In terms of biological role, catalyzes the ATP-dependent amidation of deamido-NAD to form NAD. Uses ammonia as a nitrogen source. The sequence is that of NH(3)-dependent NAD(+) synthetase from Lactococcus lactis subsp. lactis (strain IL1403) (Streptococcus lactis).